Here is a 236-residue protein sequence, read N- to C-terminus: Small ribosomal subunit protein uS2c (236 aa).

It belongs to the universal ribosomal protein uS2 family.

It localises to the plastid. The protein localises to the chloroplast. This chain is Small ribosomal subunit protein uS2c (rps2), found in Phalaenopsis aphrodite subsp. formosana (Moth orchid).